A 276-amino-acid polypeptide reads, in one-letter code: SKA complex subunit 1 homolog (276 aa).

Residues 48-78 are a coiled coil; that stretch reads VDVSLTAMEAQLQAVRRRLQEEREAFPKAKK.

It belongs to the SKA1 family.

The protein is SKA complex subunit 1 homolog of Oryza sativa subsp. indica (Rice).